The primary structure comprises 418 residues: Putative O-antigen transporter (418 aa).

Transmembrane regions (helical) follow at residues 8–28 (VWNL…LGFL), 37–57 (FGVY…DVGL), 85–105 (FLVL…DGIV), 124–144 (LLAI…ILEG), 165–185 (IPAI…GLIF), 217–237 (LFFF…MVYF), 251–271 (VAFY…PAAI), 297–317 (LLMF…SGLV), 334–354 (LNVL…FSAI), 362–382 (ITAL…YFMV), and 385–405 (YGLL…ALLL).

The protein belongs to the polysaccharide synthase family.

It is found in the cell inner membrane. It participates in bacterial outer membrane biogenesis; lipopolysaccharide biosynthesis. Functionally, could be an O-antigen transporter. The sequence is that of Putative O-antigen transporter (rfbE) from Shigella flexneri.